A 63-amino-acid chain; its full sequence is uncharacterized protein (63 aa).

This is an uncharacterized protein from Thermoproteus tenax (TTV1).